Reading from the N-terminus, the 666-residue chain is Threonine--tRNA ligase (666 aa).

The 64-residue stretch at 1-64 (MSDTVSLTFP…VDGKIEIVTR (64 aa)) folds into the TGS domain. The catalytic stretch occupies residues 245–553 (DHRKLGREMD…LIENFAGHMP (309 aa)). Zn(2+)-binding residues include Cys347, His398, and His530.

It belongs to the class-II aminoacyl-tRNA synthetase family. As to quaternary structure, homodimer. Zn(2+) is required as a cofactor.

The protein resides in the cytoplasm. It carries out the reaction tRNA(Thr) + L-threonine + ATP = L-threonyl-tRNA(Thr) + AMP + diphosphate + H(+). In terms of biological role, catalyzes the attachment of threonine to tRNA(Thr) in a two-step reaction: L-threonine is first activated by ATP to form Thr-AMP and then transferred to the acceptor end of tRNA(Thr). Also edits incorrectly charged L-seryl-tRNA(Thr). This chain is Threonine--tRNA ligase, found in Allorhizobium ampelinum (strain ATCC BAA-846 / DSM 112012 / S4) (Agrobacterium vitis (strain S4)).